We begin with the raw amino-acid sequence, 162 residues long: V-type proton ATPase subunit c' (162 aa).

Topologically, residues 1–11 (MSSNLCPIYSS) are lumenal. The helical transmembrane segment at 12–32 (FFGFAGVCASMVFSCLGAGYG) threads the bilayer. Topologically, residues 33 to 54 (TALAGRGIAAVGAFRPEIVMKS) are cytoplasmic. The helical transmembrane segment at 55-75 (LIPVVMSGIIGVYGLVMSVLI) threads the bilayer. Residues 76–93 (AGDMSPDNDYSLFSGFIH) lie on the Lumenal side of the membrane. The chain crosses the membrane as a helical span at residues 94 to 114 (LSAGLAVGLTGVAAGYAIGVV). Over 115–132 (GDRGVQSFMRQDRIFVSM) the chain is Cytoplasmic. A helical membrane pass occupies residues 133 to 153 (VLILIFAEVLGLYGLIVGLIL). The Lumenal portion of the chain corresponds to 154-162 (QTKTSNVCY).

Belongs to the V-ATPase proteolipid subunit family. As to quaternary structure, V-ATPase is a heteromultimeric enzyme composed of a peripheral catalytic V1 complex (components A to H) attached to an integral membrane V0 proton pore complex (components: a, c, c', c'', d, e, f and VOA1). The decameric c-ring forms the proton-conducting pore, and is composed of eight proteolipid subunits c, one subunit c' and one subunit c''.

The protein resides in the vacuole membrane. Proton-conducting pore forming subunit of the V0 complex of vacuolar(H+)-ATPase (V-ATPase), a multisubunit enzyme composed of a peripheral complex (V1) that hydrolyzes ATP and a membrane integral complex (V0) that translocates protons. V-ATPase is responsible for acidifying and maintaining the pH of intracellular compartments. The sequence is that of V-type proton ATPase subunit c' from Schizosaccharomyces pombe (strain 972 / ATCC 24843) (Fission yeast).